The following is a 458-amino-acid chain: tRNA modification GTPase MnmE (458 aa).

(6S)-5-formyl-5,6,7,8-tetrahydrofolate contacts are provided by Arg23, Glu80, and Lys122. One can recognise a TrmE-type G domain in the interval 218–380; the sequence is GMKIVIAGRP…LREHLQQTMG (163 aa). Asn228 provides a ligand contact to K(+). Residues 228 to 233, 247 to 253, 272 to 275, and 361 to 363 contribute to the GTP site; these read NVGKSS, TQIPGTT, DTAG, and SAR. Ser232 is a binding site for Mg(2+). Thr247, Ile249, and Thr252 together coordinate K(+). Thr253 serves as a coordination point for Mg(2+). Lys458 provides a ligand contact to (6S)-5-formyl-5,6,7,8-tetrahydrofolate.

Belongs to the TRAFAC class TrmE-Era-EngA-EngB-Septin-like GTPase superfamily. TrmE GTPase family. In terms of assembly, homodimer. Heterotetramer of two MnmE and two MnmG subunits. K(+) serves as cofactor.

It is found in the cytoplasm. Its function is as follows. Exhibits a very high intrinsic GTPase hydrolysis rate. Involved in the addition of a carboxymethylaminomethyl (cmnm) group at the wobble position (U34) of certain tRNAs, forming tRNA-cmnm(5)s(2)U34. The chain is tRNA modification GTPase MnmE from Hamiltonella defensa subsp. Acyrthosiphon pisum (strain 5AT).